The following is a 351-amino-acid chain: MYSLARPLLFSLDAERAHALALRSIDTAYRTGTTSLLSTRPVPLPTPAFGLMFPNPVGLGAGLDKNGEHIDALLALGFGFVEIGTVTPRAQDGNPKPRMFRLPEYQAVINRMGFNNLGVDALVANVQRARRRGGLLGINIGKNKDTPNEEATSDYRYCMERVYPLADYITVNISSPNTAGLRELQEEQSLRRLISDLRETQEALGAQHGKRVPMLVKVAPDLNDRDIDAAARVLADLAVDGVIATNTTVTRPLIANHPLAAEAGGLSGAPLLGQSTLVLRRLRARLPESIPLIGVGGINSGADAVAKMAAGASLVQCYSGLVYRGPQLVGECVNAIRRRREAPSSGAVAPL.

Residues 61-65 and Thr85 contribute to the FMN site; that span reads AGLDK. Substrate is bound at residue Lys65. 110 to 114 is a binding site for substrate; that stretch reads NRMGF. Positions 139 and 172 each coordinate FMN. Asn172 serves as a coordination point for substrate. Ser175 acts as the Nucleophile in catalysis. Substrate is bound at residue Asn177. Residues Lys217 and Thr245 each coordinate FMN. 246–247 contributes to the substrate binding site; the sequence is NT. FMN-binding positions include Gly268, Gly297, and 318 to 319; that span reads YS.

Belongs to the dihydroorotate dehydrogenase family. Type 2 subfamily. In terms of assembly, monomer. FMN serves as cofactor.

The protein resides in the cell membrane. It catalyses the reaction (S)-dihydroorotate + a quinone = orotate + a quinol. Its pathway is pyrimidine metabolism; UMP biosynthesis via de novo pathway; orotate from (S)-dihydroorotate (quinone route): step 1/1. Its function is as follows. Catalyzes the conversion of dihydroorotate to orotate with quinone as electron acceptor. This is Dihydroorotate dehydrogenase (quinone) from Xanthomonas oryzae pv. oryzae (strain PXO99A).